The following is a 610-amino-acid chain: L-galactono-1,4-lactone dehydrogenase, mitochondrial (610 aa).

The N-terminal 35 residues, 1-35 (MLRSLLLRRSVGHSLGTLSPSSSTIRSSFSPHRTL), are a transit peptide targeting the mitochondrion. A disordered region spans residues 17-61 (TLSPSSSTIRSSFSPHRTLCTTGQTLTPPPPPPPRPPPPPPATAS). The segment covering 19-30 (SPSSSTIRSSFS) has biased composition (low complexity). The propeptide at 36 to 101 (CTTGQTLTPP…AKHKKAQIFR (66 aa)) is removed in mature form. Over residues 43–58 (TPPPPPPPRPPPPPPA) the composition is skewed to pro residues. A helical transmembrane segment spans residues 68-84 (YAGYAALAIFSGVATYF). The region spanning 123 to 258 (TRNFNQPENL…TPAKGTIELS (136 aa)) is the FAD-binding PCMH-type domain.

The cofactor is FAD.

The protein localises to the mitochondrion membrane. The enzyme catalyses L-galactono-1,4-lactone + 4 Fe(III)-[cytochrome c] = L-dehydroascorbate + 4 Fe(II)-[cytochrome c] + 5 H(+). It catalyses the reaction L-gulono-1,4-lactone + 2 Fe(III)-[cytochrome c] = L-ascorbate + 2 Fe(II)-[cytochrome c] + 3 H(+). Its pathway is cofactor biosynthesis; L-ascorbate biosynthesis. In terms of biological role, involved in the biosynthesis of ascorbate. Catalyzes the final step of ascorbate biosynthesis. Uses L-galactono-1,4-lactone and L-gulono-1,4-lactone as substrates, but not D-galactono-1,4-lactone, D-gulono-1,4-lactone, L-mannono-1,4-lactone or D-galactonic acid. Also active with phenazine methosulfate and 1,4-benzoquinone as electron acceptors. Involved in the regulation of the accumulation of the mitochondrial respiratory complex I. Structural part of one of the plant-specific mitochondrial complex I assembly intermediates, lacking the whole distal (PD) module. Prevents the binding of the plant specific P1 protein (CPN60/HSP60), responsible for the linkage of the proximal (PP) to the distal (PD) module. This Arabidopsis thaliana (Mouse-ear cress) protein is L-galactono-1,4-lactone dehydrogenase, mitochondrial.